A 345-amino-acid polypeptide reads, in one-letter code: Holliday junction branch migration complex subunit RuvB (345 aa).

The large ATPase domain (RuvB-L) stretch occupies residues 4-182 (PDRIVSAVQR…FGIPIRLEFY (179 aa)). Residues Arg22, Gly63, Lys66, Thr67, Thr68, 129–131 (EDY), Arg172, Tyr182, and Arg219 each bind ATP. Thr67 serves as a coordination point for Mg(2+). The segment at 183 to 253 (TVDELQAIVT…IADAALSRLE (71 aa)) is small ATPAse domain (RuvB-S). The head domain (RuvB-H) stretch occupies residues 256 to 345 (ALGLDQLDRR…QSQINLFEEE (90 aa)). 3 residues coordinate DNA: Arg292, Arg311, and Arg316.

The protein belongs to the RuvB family. Homohexamer. Forms an RuvA(8)-RuvB(12)-Holliday junction (HJ) complex. HJ DNA is sandwiched between 2 RuvA tetramers; dsDNA enters through RuvA and exits via RuvB. An RuvB hexamer assembles on each DNA strand where it exits the tetramer. Each RuvB hexamer is contacted by two RuvA subunits (via domain III) on 2 adjacent RuvB subunits; this complex drives branch migration. In the full resolvosome a probable DNA-RuvA(4)-RuvB(12)-RuvC(2) complex forms which resolves the HJ.

Its subcellular location is the cytoplasm. It catalyses the reaction ATP + H2O = ADP + phosphate + H(+). In terms of biological role, the RuvA-RuvB-RuvC complex processes Holliday junction (HJ) DNA during genetic recombination and DNA repair, while the RuvA-RuvB complex plays an important role in the rescue of blocked DNA replication forks via replication fork reversal (RFR). RuvA specifically binds to HJ cruciform DNA, conferring on it an open structure. The RuvB hexamer acts as an ATP-dependent pump, pulling dsDNA into and through the RuvAB complex. RuvB forms 2 homohexamers on either side of HJ DNA bound by 1 or 2 RuvA tetramers; 4 subunits per hexamer contact DNA at a time. Coordinated motions by a converter formed by DNA-disengaged RuvB subunits stimulates ATP hydrolysis and nucleotide exchange. Immobilization of the converter enables RuvB to convert the ATP-contained energy into a lever motion, pulling 2 nucleotides of DNA out of the RuvA tetramer per ATP hydrolyzed, thus driving DNA branch migration. The RuvB motors rotate together with the DNA substrate, which together with the progressing nucleotide cycle form the mechanistic basis for DNA recombination by continuous HJ branch migration. Branch migration allows RuvC to scan DNA until it finds its consensus sequence, where it cleaves and resolves cruciform DNA. The polypeptide is Holliday junction branch migration complex subunit RuvB (Chelativorans sp. (strain BNC1)).